Consider the following 89-residue polypeptide: Small ribosomal subunit protein uS15 (89 aa).

This sequence belongs to the universal ribosomal protein uS15 family. Part of the 30S ribosomal subunit. Forms a bridge to the 50S subunit in the 70S ribosome, contacting the 23S rRNA.

In terms of biological role, one of the primary rRNA binding proteins, it binds directly to 16S rRNA where it helps nucleate assembly of the platform of the 30S subunit by binding and bridging several RNA helices of the 16S rRNA. Its function is as follows. Forms an intersubunit bridge (bridge B4) with the 23S rRNA of the 50S subunit in the ribosome. The sequence is that of Small ribosomal subunit protein uS15 from Lactobacillus helveticus (strain DPC 4571).